A 109-amino-acid chain; its full sequence is Membrane-bound lysozyme inhibitor of C-type lysozyme (109 aa).

An N-terminal signal peptide occupies residues 1–17 (MTMKKLLIIILPVLLSG). Cysteine 18 is lipidated: N-palmitoyl cysteine. Cysteine 18 carries the S-diacylglycerol cysteine lipid modification. Cysteine 37 and cysteine 102 form a disulfide bridge.

It belongs to the MliC family. Type 1 subfamily. In terms of assembly, monomer.

It localises to the cell outer membrane. Its function is as follows. Specifically inhibits C-type lysozymes. This is Membrane-bound lysozyme inhibitor of C-type lysozyme from Escherichia coli (strain K12).